The chain runs to 76 residues: Protein OPG128 (76 aa).

A disulfide bond links C17 and C21.

This sequence belongs to the orthopoxvirus OPG128 family. Interacts with sulfhydryl oxidase OPG072; this interaction involves formation of a transient disulfide-bonded intermediate, allowing disulfide bond transfer. Interacts with OPG088; this interaction involves formation of a transient disulfide-bonded intermediate, allowing disulfide bond transfer.

Its function is as follows. Late protein which probably participates in disulfide bond formation by functioning as a thiol-disulfide transfer protein between membrane-associated OPG072 and OPG08. The complete pathway for formation of disulfide bonds in intracellular virion membrane proteins sequentially involves oxidation of OPG072, OPG128 and OPG08. This Bos taurus (Bovine) protein is Protein OPG128 (OPG128).